We begin with the raw amino-acid sequence, 82 residues long: Small ribosomal subunit protein uS17 (82 aa).

Belongs to the universal ribosomal protein uS17 family. In terms of assembly, part of the 30S ribosomal subunit.

Functionally, one of the primary rRNA binding proteins, it binds specifically to the 5'-end of 16S ribosomal RNA. This chain is Small ribosomal subunit protein uS17, found in Rhodopseudomonas palustris (strain HaA2).